A 96-amino-acid chain; its full sequence is MKKLTIFSGGLGAVFSVLAQLFAVIDDSYTLGNLWFLGALAGIITMLASIQTNNKPVFSILLIASSVIGLLGTGLVYIIPTLFNIIIIYKFSKVSQ.

3 helical membrane-spanning segments follow: residues 3–23, 30–50, and 68–88; these read KLTIFSGGLGAVFSVLAQLFA, TLGNLWFLGALAGIITMLASI, and IGLLGTGLVYIIPTLFNIIII.

It is found in the cell membrane. This is an uncharacterized protein from Bacillus subtilis (strain 168).